A 180-amino-acid polypeptide reads, in one-letter code: MQGLPTIILVGPMGAGKSTIGRLLAAELQREFFDSDHEIEARCGANIAWIFDVEGEAGFRDRETAMLRELASLDAVVLATGGGAVMREDNRQALRERGTVVYLATSVEQQIRRTARDRNRPLLRQGNPEQVLRDLFAKRDPLYRATADLVVRTDRRGPRAVVNEIIRRTKRLSDPLDLKA.

An ATP-binding site is contributed by 14-19 (GAGKST). Serine 18 contributes to the Mg(2+) binding site. Aspartate 36, arginine 60, and glycine 82 together coordinate substrate. Arginine 120 is an ATP binding site. Residue arginine 139 coordinates substrate.

It belongs to the shikimate kinase family. In terms of assembly, monomer. Mg(2+) serves as cofactor.

The protein resides in the cytoplasm. It catalyses the reaction shikimate + ATP = 3-phosphoshikimate + ADP + H(+). It functions in the pathway metabolic intermediate biosynthesis; chorismate biosynthesis; chorismate from D-erythrose 4-phosphate and phosphoenolpyruvate: step 5/7. In terms of biological role, catalyzes the specific phosphorylation of the 3-hydroxyl group of shikimic acid using ATP as a cosubstrate. The chain is Shikimate kinase from Chromohalobacter salexigens (strain ATCC BAA-138 / DSM 3043 / CIP 106854 / NCIMB 13768 / 1H11).